The chain runs to 446 residues: Long-chain fatty acid transport protein (446 aa).

The N-terminal stretch at 1–25 (MSQKTLFTKSALAVAVALISTQAWS) is a signal peptide.

Belongs to the OmpP1/FadL family. As to quaternary structure, has been isolated from outer membrane preparation as a homodimer.

It localises to the cell outer membrane. In terms of biological role, involved in translocation of long-chain fatty acids across the outer membrane. It is a receptor for the bacteriophage T2. FadL may form a specific channel. The sequence is that of Long-chain fatty acid transport protein (fadL) from Escherichia coli (strain K12).